A 76-amino-acid polypeptide reads, in one-letter code: uncharacterized protein (76 aa).

The next 2 membrane-spanning stretches (helical) occupy residues 16–33 (FAFTLLAVSTFLYIGAVL) and 45–61 (TMFLADCVFLAGAFFCA).

It is found in the cell membrane. This is an uncharacterized protein from Bacillus subtilis (strain 168).